Consider the following 172-residue polypeptide: C-phycocyanin beta subunit (172 aa).

Asn72 bears the N4-methylasparagine mark. Residues Cys82 and Cys153 each contribute to the (2R,3E)-phycocyanobilin site.

It belongs to the phycobiliprotein family. As to quaternary structure, heterodimer of an alpha and a beta subunit, which further assembles into trimers and the trimers into hexamers. Contains two covalently linked bilin chromophores.

The protein localises to the cellular thylakoid membrane. In terms of biological role, light-harvesting photosynthetic bile pigment-protein from the phycobiliprotein complex (phycobilisome, PBS). Phycocyanin is the major phycobiliprotein in the PBS rod. This chain is C-phycocyanin beta subunit (cpcB), found in Synechocystis sp. (strain PCC 6701).